Reading from the N-terminus, the 218-residue chain is Adenylate kinase (218 aa).

ATP is bound at residue 10–15 (GAGKGT). Residues 30–59 (STGDMLRAAVKQGTPLGQEAKKVMDAGGLV) are NMP. Residues Thr-31, Arg-36, 57–59 (GLV), 85–88 (GFPR), and Gln-92 each bind AMP. The tract at residues 122-159 (GRRVHPASGRSYHVRFNPPKQEGLDDVTGEPLVQRDDD) is LID. Residues Arg-123 and 132 to 133 (SY) each bind ATP. Residues Arg-156 and Arg-167 each contribute to the AMP site. Gly-203 lines the ATP pocket.

Belongs to the adenylate kinase family. Monomer.

The protein localises to the cytoplasm. The catalysed reaction is AMP + ATP = 2 ADP. It participates in purine metabolism; AMP biosynthesis via salvage pathway; AMP from ADP: step 1/1. Catalyzes the reversible transfer of the terminal phosphate group between ATP and AMP. Plays an important role in cellular energy homeostasis and in adenine nucleotide metabolism. The chain is Adenylate kinase from Bordetella petrii (strain ATCC BAA-461 / DSM 12804 / CCUG 43448).